Consider the following 499-residue polypeptide: Aspartyl/glutamyl-tRNA(Asn/Gln) amidotransferase subunit B (499 aa).

It belongs to the GatB/GatE family. GatB subfamily. Heterotrimer of A, B and C subunits.

The catalysed reaction is L-glutamyl-tRNA(Gln) + L-glutamine + ATP + H2O = L-glutaminyl-tRNA(Gln) + L-glutamate + ADP + phosphate + H(+). It carries out the reaction L-aspartyl-tRNA(Asn) + L-glutamine + ATP + H2O = L-asparaginyl-tRNA(Asn) + L-glutamate + ADP + phosphate + 2 H(+). Its function is as follows. Allows the formation of correctly charged Asn-tRNA(Asn) or Gln-tRNA(Gln) through the transamidation of misacylated Asp-tRNA(Asn) or Glu-tRNA(Gln) in organisms which lack either or both of asparaginyl-tRNA or glutaminyl-tRNA synthetases. The reaction takes place in the presence of glutamine and ATP through an activated phospho-Asp-tRNA(Asn) or phospho-Glu-tRNA(Gln). In Leifsonia xyli subsp. xyli (strain CTCB07), this protein is Aspartyl/glutamyl-tRNA(Asn/Gln) amidotransferase subunit B.